The chain runs to 248 residues: 3-deoxy-manno-octulosonate cytidylyltransferase (248 aa).

Belongs to the KdsB family.

The protein localises to the cytoplasm. It catalyses the reaction 3-deoxy-alpha-D-manno-oct-2-ulosonate + CTP = CMP-3-deoxy-beta-D-manno-octulosonate + diphosphate. The protein operates within nucleotide-sugar biosynthesis; CMP-3-deoxy-D-manno-octulosonate biosynthesis; CMP-3-deoxy-D-manno-octulosonate from 3-deoxy-D-manno-octulosonate and CTP: step 1/1. It functions in the pathway bacterial outer membrane biogenesis; lipopolysaccharide biosynthesis. Activates KDO (a required 8-carbon sugar) for incorporation into bacterial lipopolysaccharide in Gram-negative bacteria. In Alteromonas mediterranea (strain DSM 17117 / CIP 110805 / LMG 28347 / Deep ecotype), this protein is 3-deoxy-manno-octulosonate cytidylyltransferase.